The sequence spans 337 residues: Sorting nexin-15 (337 aa).

The 130-residue stretch at 1–130 folds into the PX domain; sequence MSRQAKDDFL…EFFRGGEVTR (130 aa). A 1,2-diacyl-sn-glycero-3-phospho-(1D-myo-inositol-3-phosphate) is bound by residues arginine 51, serine 53, arginine 87, and arginine 96. The residue at position 105 (arginine 105) is an Omega-N-methylarginine. Positions 133-156 are disordered; that stretch reads EVSRDLRILPPPLIPTPPPDEARL. The span at 141–151 shows a compositional bias: pro residues; that stretch reads LPPPLIPTPPP. Serine 201 and serine 227 each carry phosphoserine. A disordered region spans residues 244 to 270; it reads LDQEPWEPGGQEEEEAEDGEPAPAYLG. Positions 253–263 are enriched in acidic residues; sequence GQEEEEAEDGE. The MIT domain occupies 265–337; it reads APAYLGQATE…RAEMLHTHLP (73 aa).

This sequence belongs to the sorting nexin family. As to quaternary structure, homodimer. Interacts with SNX1, SNX2 and SNX4.

The protein localises to the cytoplasm. Its subcellular location is the membrane. It localises to the cytoplasmic vesicle membrane. In terms of biological role, may be involved in several stages of intracellular trafficking. Overexpression of SNX15 disrupts the normal trafficking of proteins from the plasma membrane to recycling endosomes or the TGN. This is Sorting nexin-15 (Snx15) from Mus musculus (Mouse).